The chain runs to 72 residues: uncharacterized protein (72 aa).

This is an uncharacterized protein from Bacillus subtilis (strain 168).